Here is a 641-residue protein sequence, read N- to C-terminus: Frizzled-1 (641 aa).

A signal peptide spans 1 to 68; sequence MAEEAVPSES…WLLEAPLLLG (68 aa). At 69 to 316 the chain is on the extracellular side; it reads VRAQPAGQVS…PEELRFSRTW (248 aa). The segment at 74–99 is disordered; that stretch reads AGQVSGPGQQRPPPPQPQQGGQQYNG. The region spanning 106–224 is the FZ domain; sequence PDHGYCQPIS…HGAGELCVGQ (119 aa). 5 disulfide bridges follow: Cys-111–Cys-172, Cys-119–Cys-165, Cys-156–Cys-192, Cys-182–Cys-221, and Cys-186–Cys-209. N-linked (GlcNAc...) asparagine glycosylation is present at Asn-125. N-linked (GlcNAc...) asparagine glycosylation occurs at Asn-225. Residues 317 to 337 form a helical membrane-spanning segment; the sequence is IGIWSVLCCASTLFTVLTYLV. Residues 338–348 are Cytoplasmic-facing; it reads DMRRFSYPERP. Residues 349–369 form a helical membrane-spanning segment; it reads IIFLSGCYTAVAVAYIAGFLL. Topologically, residues 370-396 are extracellular; the sequence is EDRVVCNDKFAEDGARTVAQGTKKEGC. The chain crosses the membrane as a helical span at residues 397–417; that stretch reads TILFMMLYFFSMASSIWWVIL. Topologically, residues 418–439 are cytoplasmic; sequence SLTWFLAAGMKWGHEAIEANSQ. A helical transmembrane segment spans residues 440–460; that stretch reads YFHLAAWAVPAIKTITILALG. Residues 461–483 are Extracellular-facing; it reads QVDGDVLSGVCFVGLNNVDALRG. Residues 484–504 form a helical membrane-spanning segment; that stretch reads FVLAPLFVYLFIGTSFLLAGF. At 505–530 the chain is on the cytoplasmic side; that stretch reads VSLFRIRTIMKHDGTKTEKLEKLMVR. A helical transmembrane segment spans residues 531 to 551; that stretch reads IGVFSVLYTVPATIVIACYFY. At 552-595 the chain is on the extracellular side; the sequence is EQAFRDQWERSWVAQSCKSYAIPCPHLQGGGGVPPHPPMSPDFT. A helical transmembrane segment spans residues 596–616; that stretch reads VFMIKYLMTLIVGITSGFWIW. At 617 to 641 the chain is on the cytoplasmic side; it reads SGKTLNSWRKFYTRLTNSKQGETTV. The Lys-Thr-X-X-X-Trp motif, mediates interaction with the PDZ domain of Dvl family members signature appears at 619 to 624; the sequence is KTLNSW. The PDZ-binding signature appears at 639–641; sequence TTV.

It belongs to the G-protein coupled receptor Fz/Smo family. In terms of assembly, interacts with MYOC. Interacts with WNT7B. Ubiquitinated by ZNRF3, leading to its degradation by the proteasome. As to expression, widely expressed. Most abundant in kidney, liver, uterus, ovary and heart. Lower levels seen in brain and intestine. Extremely low in calvaria, mammary glands and testis.

The protein localises to the cell membrane. Receptor for Wnt proteins. Activated by WNT3A, WNT3, WNT1 and to a lesser extent WNT2, but apparently not by WNT4, WNT5A, WNT5B, WNT6 or WNT7A. Contradictory results have been reported for activation by WNT7B. Functions in the canonical Wnt/beta-catenin signaling pathway. The canonical Wnt/beta-catenin signaling pathway leads to the activation of disheveled proteins, inhibition of GSK-3 kinase, nuclear accumulation of beta-catenin and activation of Wnt target genes. A second signaling pathway involving PKC and calcium fluxes has been seen for some family members, but it is not yet clear if it represents a distinct pathway or if it can be integrated in the canonical pathway, as PKC seems to be required for Wnt-mediated inactivation of GSK-3 kinase. Both pathways seem to involve interactions with G-proteins. May be involved in transduction and intercellular transmission of polarity information during tissue morphogenesis and/or in differentiated tissues. This Rattus norvegicus (Rat) protein is Frizzled-1 (Fzd1).